The sequence spans 133 residues: Putative HTH-type transcriptional regulator YwnA (133 aa).

An HTH rrf2-type domain is found at 1–130 (MINSRLAVAI…ASKSLKDVMN (130 aa)). Positions 24-47 (SEIIADSVNTNPVVVRRMISLLKK) form a DNA-binding region, H-T-H motif.

This is Putative HTH-type transcriptional regulator YwnA (ywnA) from Bacillus subtilis (strain 168).